The following is a 530-amino-acid chain: Chaperone Ric-8A (530 aa).

Serine 435 is subject to Phosphoserine. Phosphothreonine is present on residues threonine 440 and threonine 442. 4 positions are modified to phosphoserine: serine 501, serine 522, serine 523, and serine 527.

It belongs to the synembryn family. In terms of assembly, interacts with GDP-bound G alpha proteins GNAI1, GNAO1 and GNAQ, and with GNA13 with lower affinity. Does not interact with G-alpha proteins when they are in complex with subunits beta and gamma. Interacts (via C-terminus) with RGS14; the interaction stimulates the dissociation of the complex between RGS14 and the active GTP-bound form of GNAI1. Interacts with NCS1; interaction is favored in the absence of Ca(2+) and myristoylation of NCS1 is not required. In terms of processing, phosphorylated at Ser-435 and Thr-440 by CK2, stabilizing its interface with G alpha proteins.

Its subcellular location is the cytoplasm. The protein resides in the cell cortex. Chaperone that specifically binds and folds nascent G alpha proteins prior to G protein heterotrimer formation, promoting their stability and activity: folds GNAI1, GNAO1, GNA13 and GNAQ. Does not fold G(s) G-alpha proteins GNAS nor GNAL. Also acts as a guanine nucleotide exchange factor (GEF) for G alpha proteins by stimulating exchange of bound GDP for free GTP. Involved in regulation of microtubule pulling forces during mitotic movement of chromosomes by stimulating G(i)-alpha protein (GNAI1), possibly leading to release G(i)-alpha-GTP and NuMA proteins from the NuMA-GPSM2-G(i)-alpha-GDP complex. Also acts as an activator for G(q)-alpha (GNAQ) protein by enhancing the G(q)-coupled receptor-mediated ERK activation. This chain is Chaperone Ric-8A (RIC8A), found in Pongo abelii (Sumatran orangutan).